We begin with the raw amino-acid sequence, 373 residues long: MIELVTDSPHPIHLVDSLQNPKLFASLSTDFPLIFITNTKLNALILPPLLDLARSLGFSVETLTIPEGEETKTGDTFLSLHQQLTDLNVPRQATLIGVGGGVILDIAGFVAATHCRGMPFIAIPTTLVAMIDASIGGKNGINLNHIKNRIGSFYLPKAVWICPRKLSFLPQQELHHGIAECIKHAYIADSAILPLLQDPNALKKEDKLSLLIKKNCLCKASVVQQDVRDYAKRQILNFGHTLGHALEMLFIGKIPHSCAISVGMVLETKLSLSLGVARSPAILHSLIQDLLRYQLPVSLKDLYMRAQIPPHNCDQILSALTYDKKKQNTPLPPFVMIEEIGLAASFDGRFCQTISKHILTKVLEEEFYAMHNN.

NAD(+) contacts are provided by residues 67 to 72 (EGEETK), 101 to 105 (GVILD), 125 to 126 (TT), Lys138, and Lys147. 3 residues coordinate Zn(2+): Glu180, His240, and His256.

This sequence belongs to the sugar phosphate cyclases superfamily. Dehydroquinate synthase family. Requires NAD(+) as cofactor. The cofactor is Co(2+). It depends on Zn(2+) as a cofactor.

The protein localises to the cytoplasm. The enzyme catalyses 7-phospho-2-dehydro-3-deoxy-D-arabino-heptonate = 3-dehydroquinate + phosphate. It participates in metabolic intermediate biosynthesis; chorismate biosynthesis; chorismate from D-erythrose 4-phosphate and phosphoenolpyruvate: step 2/7. Functionally, catalyzes the conversion of 3-deoxy-D-arabino-heptulosonate 7-phosphate (DAHP) to dehydroquinate (DHQ). This is 3-dehydroquinate synthase from Chlamydia trachomatis serovar A (strain ATCC VR-571B / DSM 19440 / HAR-13).